Here is a 31-residue protein sequence, read N- to C-terminus: Toxin BmKK16 (31 aa).

A Pyrrolidone carboxylic acid modification is found at Q1. Intrachain disulfides connect C4–C20, C10–C25, and C14–C27. The residue at position 31 (P31) is a Proline amide.

This sequence belongs to the short scorpion toxin superfamily. Potassium channel inhibitor family. Alpha-KTx 17 subfamily. In terms of processing, the N-terminus is blocked. In terms of tissue distribution, expressed by the venom gland.

Its subcellular location is the secreted. Its function is as follows. Blocker of potassium channels (Kv). This is Toxin BmKK16 from Olivierus martensii (Manchurian scorpion).